The primary structure comprises 59 residues: Large ribosomal subunit protein uL30 (59 aa).

This sequence belongs to the universal ribosomal protein uL30 family. In terms of assembly, part of the 50S ribosomal subunit.

This chain is Large ribosomal subunit protein uL30, found in Desulfatibacillum aliphaticivorans.